A 516-amino-acid chain; its full sequence is Ribose import ATP-binding protein RbsA (516 aa).

2 ABC transporter domains span residues 14-250 and 261-504; these read LRLT…VGRA and AKGA…AGIG. 46–53 is an ATP binding site; sequence GENGAGKS.

This sequence belongs to the ABC transporter superfamily. Ribose importer (TC 3.A.1.2.1) family. In terms of assembly, the complex is composed of an ATP-binding protein (RbsA), two transmembrane proteins (RbsC) and a solute-binding protein (RbsB).

The protein resides in the cell inner membrane. It carries out the reaction D-ribose(out) + ATP + H2O = D-ribose(in) + ADP + phosphate + H(+). Its function is as follows. Part of the ABC transporter complex RbsABC involved in ribose import. Responsible for energy coupling to the transport system. The polypeptide is Ribose import ATP-binding protein RbsA (Jannaschia sp. (strain CCS1)).